The primary structure comprises 745 residues: GTPase-activating protein GYP7 (745 aa).

Residues 391 to 623 (LADDATRKEV…NIWEVFFTDF (233 aa)) enclose the Rab-GAP TBC domain.

Most effectively accelerate the intrinsic GTPase activity of YPT7. It is also active, but to a lesser extent, on YPT31, YPT32 and YPT1. YPT6 and SEC4. This is GTPase-activating protein GYP7 (GYP7) from Candida glabrata (strain ATCC 2001 / BCRC 20586 / JCM 3761 / NBRC 0622 / NRRL Y-65 / CBS 138) (Yeast).